Consider the following 427-residue polypeptide: MAIQIFKVGLKDHSVLDPVLKRAREDLSSTLALVKPIVEDVKNRGDSALREYTQKFDEVIPPKSFVLEISKLNPKIDPKLKTALVKAAKNIRNFHKIQIPENKEIIIHGNKLGILHTPIESVSVYAPGGKALYPSTILMGVIPAKLAGVKNIQIVTPPRKGTLPDGLIAAAKIAGADRIVMAGGAQGIAAVSYGTESIPSSEFVVGPGNKFVTAAKVYLSGQGVIGIDSPAGPSEVLIIADDSADPMWVAADLLSQAEHGEDSVAILCTNSLSLAQKVKEEVEKALIERPKRGEMKRKSIKDHGKIFVFSNLEECFVFSNLFAPEHLEIQTKNFKKDLKKVKHAGSVFLGNYSPVAMGDYISGTNHILPTAGAARIYSSLGVSTFLKRVTWQEVSKKSIQNLYPHVKVLSEFEGLDEEHGNSVRIRR.

Positions 125, 186, and 209 each coordinate NAD(+). Substrate is bound by residues serine 234, glutamine 256, and histidine 259. The Zn(2+) site is built by glutamine 256 and histidine 259. Catalysis depends on proton acceptor residues glutamate 325 and histidine 326. Substrate contacts are provided by histidine 326, aspartate 359, glutamate 413, and histidine 419. Aspartate 359 contacts Zn(2+). Histidine 419 lines the Zn(2+) pocket.

The protein belongs to the histidinol dehydrogenase family. It depends on Zn(2+) as a cofactor.

The enzyme catalyses L-histidinol + 2 NAD(+) + H2O = L-histidine + 2 NADH + 3 H(+). It functions in the pathway amino-acid biosynthesis; L-histidine biosynthesis; L-histidine from 5-phospho-alpha-D-ribose 1-diphosphate: step 9/9. Functionally, catalyzes the sequential NAD-dependent oxidations of L-histidinol to L-histidinaldehyde and then to L-histidine. In Leptospira interrogans serogroup Icterohaemorrhagiae serovar Lai (strain 56601), this protein is Histidinol dehydrogenase.